The sequence spans 478 residues: Methionine aminopeptidase 2 (478 aa).

The interval 1 to 122 is disordered; sequence MAGVEEVAAS…TDPPSVPICD (122 aa). Ala2 is subject to N-acetylalanine. Residues 36 to 46 are compositionally biased toward basic residues; the sequence is KKKRRKKKKSK. Ser45 carries the phosphoserine modification. Residues 55 to 79 are compositionally biased toward basic and acidic residues; it reads EPDKESGASVDEVARQLERSALEDK. Ser60 and Ser63 each carry phosphoserine; alternate. O-linked (GlcNAc) serine; alternate glycans are attached at residues Ser60 and Ser63. Position 74 is a phosphoserine (Ser74). Over residues 80–92 the composition is skewed to acidic residues; it reads ERDEDDEDGDGDG. A compositionally biased stretch (basic residues) spans 97–109; that stretch reads GKKKKKKKKKRGP. His231 is a substrate binding site. A divalent metal cation contacts are provided by Asp251, Asp262, and His331. His339 is a substrate binding site. A divalent metal cation is bound by residues Glu364 and Glu459.

Belongs to the peptidase M24A family. Methionine aminopeptidase eukaryotic type 2 subfamily. As to quaternary structure, interacts strongly with the eIF-2 gamma-subunit EIF2S3. Binds EIF2S1 at low magnesium concentrations. Co(2+) is required as a cofactor. Zn(2+) serves as cofactor. The cofactor is Mn(2+). It depends on Fe(2+) as a cofactor. Post-translationally, contains approximately 12 O-linked N-acetylglucosamine (GlcNAc) residues. O-glycosylation is required for EIF2S1 binding.

Its subcellular location is the cytoplasm. It catalyses the reaction Release of N-terminal amino acids, preferentially methionine, from peptides and arylamides.. Functionally, cotranslationally removes the N-terminal methionine from nascent proteins. The N-terminal methionine is often cleaved when the second residue in the primary sequence is small and uncharged (Met-Ala-, Cys, Gly, Pro, Ser, Thr, or Val). The catalytic activity of human METAP2 toward Met-Val peptides is consistently two orders of magnitude higher than that of METAP1, suggesting that it is responsible for processing proteins containing N-terminal Met-Val and Met-Thr sequences in vivo. Protects eukaryotic initiation factor EIF2S1 from translation-inhibiting phosphorylation by inhibitory kinases such as EIF2AK2/PKR and EIF2AK1/HCR. Plays a critical role in the regulation of protein synthesis. The chain is Methionine aminopeptidase 2 from Homo sapiens (Human).